Consider the following 85-residue polypeptide: Large ribosomal subunit protein eL34 (85 aa).

Belongs to the eukaryotic ribosomal protein eL34 family.

This Saccharolobus islandicus (strain Y.N.15.51 / Yellowstone #2) (Sulfolobus islandicus) protein is Large ribosomal subunit protein eL34.